The chain runs to 227 residues: Cytochrome c oxidase subunit 2 (227 aa).

Topologically, residues Met-1–Ser-14 are mitochondrial intermembrane. Residues Pro-15 to Met-45 traverse the membrane as a helical segment. The Mitochondrial matrix segment spans residues Leu-46–Gln-59. A helical transmembrane segment spans residues Glu-60–Met-87. Over Asp-88–Leu-227 the chain is Mitochondrial intermembrane. The Cu cation site is built by His-161, Cys-196, Glu-198, Cys-200, His-204, and Met-207. Mg(2+) is bound at residue Glu-198.

Belongs to the cytochrome c oxidase subunit 2 family. Component of the cytochrome c oxidase (complex IV, CIV), a multisubunit enzyme composed of 14 subunits. The complex is composed of a catalytic core of 3 subunits MT-CO1, MT-CO2 and MT-CO3, encoded in the mitochondrial DNA, and 11 supernumerary subunits COX4I, COX5A, COX5B, COX6A, COX6B, COX6C, COX7A, COX7B, COX7C, COX8 and NDUFA4, which are encoded in the nuclear genome. The complex exists as a monomer or a dimer and forms supercomplexes (SCs) in the inner mitochondrial membrane with NADH-ubiquinone oxidoreductase (complex I, CI) and ubiquinol-cytochrome c oxidoreductase (cytochrome b-c1 complex, complex III, CIII), resulting in different assemblies (supercomplex SCI(1)III(2)IV(1) and megacomplex MCI(2)III(2)IV(2)). Found in a complex with TMEM177, COA6, COX18, COX20, SCO1 and SCO2. Interacts with TMEM177 in a COX20-dependent manner. Interacts with COX20. Interacts with COX16. The cofactor is Cu cation.

It localises to the mitochondrion inner membrane. The enzyme catalyses 4 Fe(II)-[cytochrome c] + O2 + 8 H(+)(in) = 4 Fe(III)-[cytochrome c] + 2 H2O + 4 H(+)(out). Its function is as follows. Component of the cytochrome c oxidase, the last enzyme in the mitochondrial electron transport chain which drives oxidative phosphorylation. The respiratory chain contains 3 multisubunit complexes succinate dehydrogenase (complex II, CII), ubiquinol-cytochrome c oxidoreductase (cytochrome b-c1 complex, complex III, CIII) and cytochrome c oxidase (complex IV, CIV), that cooperate to transfer electrons derived from NADH and succinate to molecular oxygen, creating an electrochemical gradient over the inner membrane that drives transmembrane transport and the ATP synthase. Cytochrome c oxidase is the component of the respiratory chain that catalyzes the reduction of oxygen to water. Electrons originating from reduced cytochrome c in the intermembrane space (IMS) are transferred via the dinuclear copper A center (CU(A)) of subunit 2 and heme A of subunit 1 to the active site in subunit 1, a binuclear center (BNC) formed by heme A3 and copper B (CU(B)). The BNC reduces molecular oxygen to 2 water molecules using 4 electrons from cytochrome c in the IMS and 4 protons from the mitochondrial matrix. This chain is Cytochrome c oxidase subunit 2 (MT-CO2), found in Equus asinus (Donkey).